A 361-amino-acid chain; its full sequence is tRNA-specific 2-thiouridylase MnmA (361 aa).

Residues 10-17 (GMSGGVDS) and methionine 36 each bind ATP. The active-site Nucleophile is cysteine 104. An intrachain disulfide couples cysteine 104 to cysteine 202. Glycine 128 is an ATP binding site. The tract at residues 152–154 (KDQ) is interaction with tRNA. The active-site Cysteine persulfide intermediate is cysteine 202. The tract at residues 308 to 309 (RY) is interaction with tRNA.

Belongs to the MnmA/TRMU family.

The protein localises to the cytoplasm. The enzyme catalyses S-sulfanyl-L-cysteinyl-[protein] + uridine(34) in tRNA + AH2 + ATP = 2-thiouridine(34) in tRNA + L-cysteinyl-[protein] + A + AMP + diphosphate + H(+). Its function is as follows. Catalyzes the 2-thiolation of uridine at the wobble position (U34) of tRNA, leading to the formation of s(2)U34. In Clostridioides difficile (strain 630) (Peptoclostridium difficile), this protein is tRNA-specific 2-thiouridylase MnmA.